We begin with the raw amino-acid sequence, 500 residues long: Endothelial lipase (500 aa).

The N-terminal stretch at 1 to 20 (MSNSVPLLCFWSLCYCFAAG) is a signal peptide. A disulfide bond links cysteine 64 and cysteine 77. Asparagine 80 and asparagine 136 each carry an N-linked (GlcNAc...) asparagine glycan. Catalysis depends on serine 169, which acts as the Nucleophile. The active-site Charge relay system is the aspartate 193. A disulfide bridge connects residues cysteine 252 and cysteine 272. Histidine 274 (charge relay system) is an active-site residue. 2 disulfide bridges follow: cysteine 297-cysteine 316 and cysteine 308-cysteine 311. 325 to 337 (KMRNKRNSKMYLK) contacts heparin. The PLAT domain occupies 347–482 (YHYQMKIHVF…SPGRELWFRK (136 aa)). Asparagine 393, asparagine 469, and asparagine 491 each carry an N-linked (GlcNAc...) asparagine glycan. Cysteine 463 and cysteine 483 are joined by a disulfide.

This sequence belongs to the AB hydrolase superfamily. Lipase family. In terms of assembly, head to tail homodimer. As to expression, high level of expression in the liver, placenta, lung, thyroid, kidney, testis and in the corpus luteum of the ovary. Expressed also in coronary artery endothelial cells, umbilical vein endothelial cells and in hepatocytes and osteosarcoma cell lines. Not detected in heart, brain and muscle.

It localises to the secreted. The enzyme catalyses a triacylglycerol + H2O = a diacylglycerol + a fatty acid + H(+). It catalyses the reaction a 1,2-diacyl-sn-glycero-3-phosphocholine + H2O = a 2-acyl-sn-glycero-3-phosphocholine + a fatty acid + H(+). It carries out the reaction 1,2,3-tri-(9Z-octadecenoyl)-glycerol + H2O = di-(9Z)-octadecenoylglycerol + (9Z)-octadecenoate + H(+). The catalysed reaction is 1,2,3-tributanoylglycerol + H2O = dibutanoylglycerol + butanoate + H(+). The enzyme catalyses 1,2-dihexadecanoyl-sn-glycero-3-phosphocholine + H2O = hexadecanoyl-sn-glycero-3-phosphocholine + hexadecanoate + H(+). With respect to regulation, inhibited by serum and NaCl. Exerts both phospholipase and triglyceride lipase activities. More active as a phospholipase than a triglyceride lipase. Hydrolyzes triglycerides, both with short-chain fatty acyl groups (tributyrin) and long-chain fatty acyl groups (triolein) with similar levels of activity toward both types of substrates. Hydrolyzes high density lipoproteins (HDL) more efficiently than other lipoproteins. This chain is Endothelial lipase (LIPG), found in Homo sapiens (Human).